A 274-amino-acid polypeptide reads, in one-letter code: MSTYFISDIHGCYEEFRILLEKSSFNDKKDYLWIAGDLVSRGPDSLKVVKYLYSLKDRVQIVLGNHDINLIAVHAGIKDNKKENYFDEFLSSPDSVELINWLRCQSFLKVDEKRKIIMSHAGISPQWDINIAKVCALEIEDRLSHKNYALFLKEIYHNNIDFWRLDLNQLDRLRYSMNSFTRMRYCYPDGRLNMFCKKSPDFVKYPLRPWFLMPSSISKVYSIFFGHWSSLKGTHVPKPFFPLDAGCCWGEELVMLRWEDGKWFSQAYLSKKCI.

This sequence belongs to the Ap4A hydrolase family.

The catalysed reaction is P(1),P(4)-bis(5'-adenosyl) tetraphosphate + H2O = 2 ADP + 2 H(+). Its function is as follows. Hydrolyzes diadenosine 5',5'''-P1,P4-tetraphosphate to yield ADP. This is Bis(5'-nucleosyl)-tetraphosphatase, symmetrical from Buchnera aphidicola subsp. Acyrthosiphon pisum (strain 5A).